The following is a 133-amino-acid chain: MTSSLALVLLLGGAAVCAELTLRGGYRERSNHQDDPKYLELAHYATSTWSAQQPGKTHFDTVVEVLKVETQTVAGTNYRLTLKVAESTCELTSTYSKDTCQANANAAHRTCTAVIYENLQGEKSVSSFECAAA.

The N-terminal stretch at 1–18 (MTSSLALVLLLGGAAVCA) is a signal peptide. The Cystatin domain occupies 34-118 (DDPKYLELAH…RTCTAVIYEN (85 aa)).

This sequence belongs to the cystatin family. Salivary gland, midgut and other tissues.

The protein localises to the secreted. In terms of biological role, inhibitor of cysteine proteinases. Inhibits host cathepsin L (CTSL) and S (CTSS). Modulates production of various cytokines and chemokines in lipopolysaccharide (LPS)-stimulated mouse dendritic cell. Suppresses maturation of mouse bone-marrow-derived dendritic cells (BMDCs). (Microbial infection) Modulates Borrelia miyamotoi-stimulated immune responses in mice by suppressing activities of host dendritic and T-cells. This is Salivary cystatin-L2 from Ixodes persulcatus (Taiga tick).